We begin with the raw amino-acid sequence, 329 residues long: Eukaryotic translation initiation factor 2 subunit 1 (329 aa).

An S1 motif domain is found at 24 to 95 (DDLIMVKVNR…QKGYIDLSKR (72 aa)). Position 59 is a phosphoserine; by eIK1, eIK2 and PK4 (S59). A disordered region spans residues 291–329 (LDKHDGISSDDDDYNTSDEDDENSSEEDENTSEDEEEED). Residues 298–329 (SSDDDDYNTSDEDDENSSEEDENTSEDEEEED) show a composition bias toward acidic residues.

The protein belongs to the eIF-2-alpha family. Post-translationally, phosphorylated at Ser-59 by eIK1 in response to amino acid starvation. Phosphorylates at Ser-59 in schizonts and gametocytes but not in rings and young trophozoites. Phosphorylates at Ser-59 by eIK2 in salivary gland sporozoites but not in midgut and hemocoel sporozoites. Dephosphorylated at Ser-59 by UIS2. Phosphorylation of eIF2alpha subunit of the pre-initiation complex eIF2 inhibits recycling of inactive eIF2-GDP to active eIF2-GTP by limiting the activity of the guanine nucleotide exchange factor eIF2B and thus, inhibits protein translation.

The protein resides in the cytoplasm. The protein localises to the stress granule. Functions in the early steps of protein synthesis by forming a ternary complex with GTP and initiator tRNA. May regulate protein translation in response to amino acid starvation. May regulate protein at various stages of parasite development. This Plasmodium falciparum (isolate 3D7) protein is Eukaryotic translation initiation factor 2 subunit 1.